We begin with the raw amino-acid sequence, 675 residues long: Protein REPRESSOR OF VERNALIZATION 1 (675 aa).

Residues 1 to 143 (MGRRRRFTQQ…DPVKVTGKGK (143 aa)) are disordered. A compositionally biased stretch (low complexity) spans 22 to 31 (AEPPKTAKPA). Acidic residues predominate over residues 48–70 (EEEDEDEEDELELEDEEDDEKDL). The span at 71 to 86 (EEMRRNEEEERREETR) shows a compositional bias: basic and acidic residues. The Nuclear localization signal signature appears at 73–80 (MRRNEEEE). A compositionally biased stretch (basic residues) spans 87-96 (TRRRRGRKPK). Positions 113-127 (SDEEEEEEVREEDST) are enriched in acidic residues. Positions 157 to 275 (NTFELEDPVL…TVAKKLWNLT (119 aa)) constitute a BAH domain. Disordered stretches follow at residues 300–349 (ELPD…KPET), 493–512 (GLTPAEKTSEPEESRRLQMT), and 587–675 (LASP…ADHE). Composition is skewed to basic and acidic residues over residues 333 to 346 (VSRDATGKSEHFVK), 499 to 512 (KTSEPEESRRLQMT), and 613 to 627 (KLEKQKSFTKPKPEE). Residues 372–518 (YRDKWLDKLL…LQMTDARCER (147 aa)) enclose the TFIIS central domain.

In terms of tissue distribution, expressed constitutively.

The protein localises to the nucleus. Component of a grass-specific mechanism of vernalization, a process by which prolonged cold exposure provides competence to flower in daylengths longer than 12 hours. Negative regulator of flowering required for vernalization establishment by repressing VRN1 before vernalization and in the fall season. This is Protein REPRESSOR OF VERNALIZATION 1 from Brachypodium distachyon (Purple false brome).